The primary structure comprises 513 residues: Maturase K (513 aa).

The protein belongs to the intron maturase 2 family. MatK subfamily.

Its subcellular location is the plastid. It localises to the chloroplast. Its function is as follows. Usually encoded in the trnK tRNA gene intron. Probably assists in splicing its own and other chloroplast group II introns. This is Maturase K from Arundo donax (Giant reed).